The primary structure comprises 448 residues: Exodeoxyribonuclease 7 large subunit (448 aa).

The protein belongs to the XseA family. As to quaternary structure, heterooligomer composed of large and small subunits.

It is found in the cytoplasm. The catalysed reaction is Exonucleolytic cleavage in either 5'- to 3'- or 3'- to 5'-direction to yield nucleoside 5'-phosphates.. In terms of biological role, bidirectionally degrades single-stranded DNA into large acid-insoluble oligonucleotides, which are then degraded further into small acid-soluble oligonucleotides. In Geobacillus kaustophilus (strain HTA426), this protein is Exodeoxyribonuclease 7 large subunit.